A 407-amino-acid chain; its full sequence is Protein RecA (407 aa).

Residue 79–86 coordinates ATP; the sequence is GPESSGKT. A disordered region spans residues 358 to 407; it reads LSLEASPEESDAKTLRRXASRGAGASSSRVQEGSAANDHFQDESTTAKLL. Residues 377 to 386 show a composition bias toward low complexity; sequence SRGAGASSSR.

This sequence belongs to the RecA family.

The protein resides in the cytoplasm. Its function is as follows. Can catalyze the hydrolysis of ATP in the presence of single-stranded DNA, the ATP-dependent uptake of single-stranded DNA by duplex DNA, and the ATP-dependent hybridization of homologous single-stranded DNAs. It interacts with LexA causing its activation and leading to its autocatalytic cleavage. This Treponema pallidum (strain Nichols) protein is Protein RecA.